Here is a 361-residue protein sequence, read N- to C-terminus: Chorismate synthase (361 aa).

2 residues coordinate NADP(+): arginine 48 and arginine 54. FMN contacts are provided by residues 125–127, 238–239, glycine 278, 293–297, and arginine 319; these read RSS, NA, and KPTSS.

Belongs to the chorismate synthase family. In terms of assembly, homotetramer. The cofactor is FMNH2.

The enzyme catalyses 5-O-(1-carboxyvinyl)-3-phosphoshikimate = chorismate + phosphate. It participates in metabolic intermediate biosynthesis; chorismate biosynthesis; chorismate from D-erythrose 4-phosphate and phosphoenolpyruvate: step 7/7. Functionally, catalyzes the anti-1,4-elimination of the C-3 phosphate and the C-6 proR hydrogen from 5-enolpyruvylshikimate-3-phosphate (EPSP) to yield chorismate, which is the branch point compound that serves as the starting substrate for the three terminal pathways of aromatic amino acid biosynthesis. This reaction introduces a second double bond into the aromatic ring system. The sequence is that of Chorismate synthase from Enterobacter sp. (strain 638).